A 220-amino-acid polypeptide reads, in one-letter code: MPGLTIGDTVPNLELDSTHGKIRIHDFVGDTYVILFSHPGDFTPVCTTELAAMAGYAKEFDKRGVKLLGISCDDVQSHKDWIKDIEAYKPGNRVTYPIMADPSREAIKQLNMVDPDEKDSNGGHLPSRALHIVGPDKKVKLSFLYPACVGRNMDEVVRAVDALQTAAKHAVATPVNWKPGERVVIPPGVSDDEAKEKFPQGFDTADLPSGKGYLRFTKVG.

Residues 4-165 (LTIGDTVPNL…VVRAVDALQT (162 aa)) enclose the Thioredoxin domain. The active-site Cysteine sulfenic acid (-SOH) intermediate is the cysteine 46. The Bipartite nuclear localization signal motif lies at 195-218 (KEKFPQGFDTADLPSGKGYLRFTK).

Belongs to the peroxiredoxin family. Prx6 subfamily.

The protein localises to the nucleus. It localises to the cytoplasm. It carries out the reaction a hydroperoxide + [thioredoxin]-dithiol = an alcohol + [thioredoxin]-disulfide + H2O. In terms of biological role, thiol-specific peroxidase that catalyzes the reduction of hydrogen peroxide and organic hydroperoxides to water and alcohols, respectively. Seems to contribute to the inhibition of germination during stress. In Oryza sativa subsp. japonica (Rice), this protein is 1-Cys peroxiredoxin A.